We begin with the raw amino-acid sequence, 331 residues long: Peroxidase 60 (331 aa).

An N-terminal signal peptide occupies residues 1 to 26; sequence MAVKISTIEVLILSLALLSFGHGCYG. Cystine bridges form between C37-C113, C70-C75, C119-C321, and C198-C230. The active-site Proton acceptor is the H68. Residues D69, G74, D76, and S78 each contribute to the Ca(2+) site. P161 contributes to the substrate binding site. Position 191 (H191) interacts with heme b. T192 is a Ca(2+) binding site. N245 is a glycosylation site (N-linked (GlcNAc...) asparagine). Ca(2+) contacts are provided by S248 and D253.

The protein belongs to the peroxidase family. Classical plant (class III) peroxidase subfamily. It depends on heme b as a cofactor. Ca(2+) serves as cofactor. In terms of tissue distribution, expressed in roots, slightly in leaves.

The protein localises to the secreted. It catalyses the reaction 2 a phenolic donor + H2O2 = 2 a phenolic radical donor + 2 H2O. In terms of biological role, removal of H(2)O(2), oxidation of toxic reductants, biosynthesis and degradation of lignin, suberization, auxin catabolism, response to environmental stresses such as wounding, pathogen attack and oxidative stress. These functions might be dependent on each isozyme/isoform in each plant tissue. The chain is Peroxidase 60 (PER60) from Arabidopsis thaliana (Mouse-ear cress).